We begin with the raw amino-acid sequence, 215 residues long: MADKSDLNALSGRFRGYYPVVIDVETAGFNAQTDALLEIAAVTLQMNKDGWLLPDETLHFHVDPFEGANLEPEALAFNGIDPTNPLRGAVSEHDALHAIFKAVRKGLKEQGCNRAIIVAHNAHFDHSFVMAAAERASLKRNPFHPFATFDTAALSGLVLGQTVLAKACLTAGIPFDSSQAHSALYDTMQTAKLFCELVNRWKKLGGWPVPAGESE.

An Exonuclease domain is found at 20–194 (VVIDVETAGF…YDTMQTAKLF (175 aa)). Asp23, Glu25, His181, and Asp186 together coordinate Mg(2+). Catalysis depends on His181, which acts as the Proton donor/acceptor.

This sequence belongs to the RNase T family. As to quaternary structure, homodimer. The cofactor is Mg(2+).

In terms of biological role, trims short 3' overhangs of a variety of RNA species, leaving a one or two nucleotide 3' overhang. Responsible for the end-turnover of tRNA: specifically removes the terminal AMP residue from uncharged tRNA (tRNA-C-C-A). Also appears to be involved in tRNA biosynthesis. The chain is Ribonuclease T from Yersinia enterocolitica serotype O:8 / biotype 1B (strain NCTC 13174 / 8081).